The chain runs to 198 residues: Protein hunchback (198 aa).

2 disordered regions span residues 16–116 (SHHH…NPMQ) and 158–198 (LTPP…KYMA). Basic residues predominate over residues 17 to 31 (HHHHHHHAHHSHHQH). Composition is skewed to low complexity over residues 35–46 (SNSNSNASSPHQ) and 68–83 (QQQQ…QQQQ). Polar residues predominate over residues 95-105 (PSPSNNDQNSP). Positions 179-198 (EPEKEHDLMSNSSEDMKYMA) are enriched in basic and acidic residues.

This sequence belongs to the hunchback C2H2-type zinc-finger protein family.

The protein localises to the nucleus. Gap class segmentation protein that controls development of head structures. The chain is Protein hunchback (hb) from Drosophila cyrtoloma (Fruit fly).